A 153-amino-acid polypeptide reads, in one-letter code: Superoxide dismutase [Cu-Zn] (153 aa).

Residues His-45, His-47, and His-62 each coordinate Cu cation. Residues Cys-56 and Cys-145 are joined by a disulfide bond. Residues His-62, His-70, His-79, and Asp-82 each contribute to the Zn(2+) site. His-119 is a Cu cation binding site.

This sequence belongs to the Cu-Zn superoxide dismutase family. As to quaternary structure, homodimer. Requires Cu cation as cofactor. The cofactor is Zn(2+).

Its subcellular location is the cytoplasm. It catalyses the reaction 2 superoxide + 2 H(+) = H2O2 + O2. Its function is as follows. Destroys radicals which are normally produced within the cells and which are toxic to biological systems. The protein is Superoxide dismutase [Cu-Zn] of Drosophila willistoni (Fruit fly).